Consider the following 45-residue polypeptide: Large ribosomal subunit protein bL34 (45 aa).

The segment at 1–45 (MTKRTFGGTSRKRKRVSGFRVRMRSHTGRRVIKSRRQKGRERIAV) is disordered. Over residues 10 to 39 (SRKRKRVSGFRVRMRSHTGRRVIKSRRQKG) the composition is skewed to basic residues.

The protein belongs to the bacterial ribosomal protein bL34 family.

The protein is Large ribosomal subunit protein bL34 of Prochlorococcus marinus (strain MIT 9301).